A 328-amino-acid polypeptide reads, in one-letter code: C-type lectin domain family 11 member A (328 aa).

A signal peptide spans 1 to 21 (MQAAWLLGALLVPHLLSFGHG). Residues 58 to 111 (PTGVGNKDNLAENSEGKEVWEATETQGEEEEEETTTTPSSSPTPFPSPSPTSED) are disordered. One can recognise a C-type lectin domain in the interval 188 to 325 (LGHKCFLLSR…CERRLYFVCE (138 aa)). 2 disulfides stabilise this stretch: Cys-209–Cys-324 and Cys-301–Cys-316.

In terms of processing, O-glycosylated. Probably sulfated on the O-glycans.

The protein localises to the cytoplasm. It localises to the secreted. Promotes osteogenesis by stimulating the differentiation of mesenchymal progenitors into mature osteoblasts. Important for repair and maintenance of adult bone. In Rattus norvegicus (Rat), this protein is C-type lectin domain family 11 member A (Clec11a).